We begin with the raw amino-acid sequence, 309 residues long: Dihydroorotate dehydrogenase B (NAD(+)), catalytic subunit (309 aa).

Residues S21 and 45–46 contribute to the FMN site; that span reads KA. Substrate contacts are provided by residues K45 and 69-73; that span reads NAIGL. 2 residues coordinate FMN: N99 and N127. A substrate-binding site is contributed by N127. C130 acts as the Nucleophile in catalysis. Positions 165 and 191 each coordinate FMN. 192 to 193 lines the substrate pocket; it reads NT. FMN contacts are provided by residues G217, 243–244, and 265–266; these read GG and GT.

This sequence belongs to the dihydroorotate dehydrogenase family. Type 1 subfamily. Heterotetramer of 2 PyrK and 2 PyrD type B subunits. The cofactor is FMN.

The protein localises to the cytoplasm. The catalysed reaction is (S)-dihydroorotate + NAD(+) = orotate + NADH + H(+). It participates in pyrimidine metabolism; UMP biosynthesis via de novo pathway; orotate from (S)-dihydroorotate (NAD(+) route): step 1/1. Functionally, catalyzes the conversion of dihydroorotate to orotate with NAD(+) as electron acceptor. The protein is Dihydroorotate dehydrogenase B (NAD(+)), catalytic subunit (pyrD) of Exiguobacterium sibiricum (strain DSM 17290 / CCUG 55495 / CIP 109462 / JCM 13490 / 255-15).